The primary structure comprises 188 residues: MQTRLWVTGYRSFELGAFNDKDPKIEVIKRALKENLIDQLENNGLEWIITGGQMGTEQWTCETAIGLKKDFPQLKIALMLPFSNFAANWNQEHQVKLTDLRTRVDFSEALSKESYKSPIQLRNFQAFMLKHTDGALMVYDPDNPGKAEFEYKAIQAYQLEHPDYSLKTIDFDMLTDISNEIEEEKRPW.

This sequence belongs to the UPF0398 family.

The polypeptide is UPF0398 protein OEOE_1093 (Oenococcus oeni (strain ATCC BAA-331 / PSU-1)).